The following is a 181-amino-acid chain: Heavy metal-associated isoprenylated plant protein 46 (181 aa).

One can recognise an HMA domain in the interval 2-71; that stretch reads KQKILIRVTM…KVAFAELVSV (70 aa). Residues 74 to 121 form a disordered region; the sequence is VEPPKKEDEKKGGDGKGAEGKGGDQKGGDKKGPDDKEPPEPKPVPCYP. Residues 75–113 show a composition bias toward basic and acidic residues; the sequence is EPPKKEDEKKGGDGKGAEGKGGDQKGGDKKGPDDKEPPE. C178 carries the cysteine methyl ester modification. C178 carries S-farnesyl cysteine lipidation. A propeptide spans 179 to 181 (removed in mature form); the sequence is KIM.

Belongs to the HIPP family.

In terms of biological role, probable heavy-metal-binding protein. The chain is Heavy metal-associated isoprenylated plant protein 46 from Arabidopsis thaliana (Mouse-ear cress).